The sequence spans 658 residues: Probable Xaa-Pro aminopeptidase P (658 aa).

Asp449, Asp460, Glu558, and Glu572 together coordinate Mn(2+).

Belongs to the peptidase M24B family. Mn(2+) is required as a cofactor.

It catalyses the reaction Release of any N-terminal amino acid, including proline, that is linked to proline, even from a dipeptide or tripeptide.. Functionally, catalyzes the removal of a penultimate prolyl residue from the N-termini of peptides. This Aspergillus clavatus (strain ATCC 1007 / CBS 513.65 / DSM 816 / NCTC 3887 / NRRL 1 / QM 1276 / 107) protein is Probable Xaa-Pro aminopeptidase P (ampp).